The chain runs to 592 residues: ATP-dependent lipid A-core flippase (592 aa).

6 consecutive transmembrane segments (helical) span residues 31 to 51 (LSSF…EGII), 76 to 96 (AMLV…TYFL), 134 to 154 (AVIF…ITLV), 161 to 181 (LALL…VAVI), 261 to 281 (VTQF…MVQA), and 288 to 308 (VGGF…LKHL). Positions 35-317 (ILAMVAMGVV…LTDVNQPMQR (283 aa)) constitute an ABC transmembrane type-1 domain. The ABC transporter domain occupies 349 to 587 (LRFEHVTFRY…DGLYAGLHRI (239 aa)). 383-390 (GPSGSGKT) is an ATP binding site.

It belongs to the ABC transporter superfamily. Lipid exporter (TC 3.A.1.106) family. Homodimer.

The protein resides in the cell inner membrane. It carries out the reaction ATP + H2O + lipid A-core oligosaccharideSide 1 = ADP + phosphate + lipid A-core oligosaccharideSide 2.. In terms of biological role, involved in lipopolysaccharide (LPS) biosynthesis. Translocates lipid A-core from the inner to the outer leaflet of the inner membrane. Transmembrane domains (TMD) form a pore in the inner membrane and the ATP-binding domain (NBD) is responsible for energy generation. The chain is ATP-dependent lipid A-core flippase from Ralstonia nicotianae (strain ATCC BAA-1114 / GMI1000) (Ralstonia solanacearum).